Consider the following 273-residue polypeptide: Putative phosphoenolpyruvate synthase regulatory protein (273 aa).

An ADP-binding site is contributed by 154-161; that stretch reads GVSRSGKT.

Belongs to the pyruvate, phosphate/water dikinase regulatory protein family. PSRP subfamily.

It catalyses the reaction [pyruvate, water dikinase] + ADP = [pyruvate, water dikinase]-phosphate + AMP + H(+). The enzyme catalyses [pyruvate, water dikinase]-phosphate + phosphate + H(+) = [pyruvate, water dikinase] + diphosphate. Functionally, bifunctional serine/threonine kinase and phosphorylase involved in the regulation of the phosphoenolpyruvate synthase (PEPS) by catalyzing its phosphorylation/dephosphorylation. This is Putative phosphoenolpyruvate synthase regulatory protein from Halorhodospira halophila (strain DSM 244 / SL1) (Ectothiorhodospira halophila (strain DSM 244 / SL1)).